We begin with the raw amino-acid sequence, 330 residues long: Aquaporin-3 (330 aa).

The Cytoplasmic portion of the chain corresponds to 1–40 (MSATPIIHLRDVKKRTGVLNAWERVRNKPQVHWAMECFAE). The chain crosses the membrane as a helical span at residues 41-61 (ALGVFFYVYFGLGSTAAWVIG). Residues 62-71 (NILKQSGLSS) are Extracellular-facing. Residues 72–92 (VFQIGFAYAFGILFAIGVCAA) form a helical membrane-spanning segment. Residues 93 to 124 (TSGGHFNPCVTIAFTIFRGFPPLKAVRYIVAQ) lie on the Cytoplasmic side of the membrane. The short motif at 99 to 101 (NPC) is the NPA 1 element. A helical transmembrane segment spans residues 125-145 (ILGAYIASALVYNQWKVLIVE). Residues 146–157 (SELLLKQAGVYE) lie on the Extracellular side of the membrane. The chain crosses the membrane as a helical span at residues 158–178 (TTMFTPNGPAGIFALYLLPGA). The Cytoplasmic portion of the chain corresponds to 179-183 (QTLPR). The chain crosses the membrane as a helical span at residues 184 to 204 (AFLNEFVNCFVLALVIWAALD). The Extracellular portion of the chain corresponds to 205-207 (PTS). The helical transmembrane segment at 208–228 (FMIPPVMAPFIIAAAYAGSIW) threads the bilayer. Residues 229–264 (GYAVPAISLNSARDIGCRLFALTIWGKSAAGGSYSA) are Cytoplasmic-facing. An NPA 2 motif is present at residues 238 to 240 (NSA). Residues 265–285 (IAALVNIPATLLAAVVYELFL) traverse the membrane as a helical segment. At 286 to 330 (VDSDRVVAGSHLEFMNVAANHRRHRQQAEDDNLVEADDSSQEKPV) the chain is on the extracellular side. Residues 308–330 (RHRQQAEDDNLVEADDSSQEKPV) form a disordered region. The segment covering 314-324 (EDDNLVEADDS) has biased composition (acidic residues).

It belongs to the MIP/aquaporin (TC 1.A.8) family.

It localises to the cell membrane. The catalysed reaction is H2O(in) = H2O(out). It catalyses the reaction CO2(out) = CO2(in). In terms of biological role, water channel required to facilitate the transport of water across membranes. Also mediates the transport of carbon dioxide across the membrane. The chain is Aquaporin-3 from Laccaria bicolor (Bicoloured deceiver).